We begin with the raw amino-acid sequence, 369 residues long: Probable peptidoglycan glycosyltransferase FtsW (369 aa).

8 consecutive transmembrane segments (helical) span residues 11 to 31, 48 to 68, 77 to 97, 134 to 151, 154 to 174, 177 to 197, 265 to 285, and 306 to 326; these read LLSV…SSSV, NFIH…VPIY, LILC…SNHG, TSTI…KLLL, PDFG…FLIG, FLFL…LIYF, LGYL…FQGM, and ISLL…GILP.

The protein belongs to the SEDS family. FtsW subfamily.

The protein resides in the cell inner membrane. The catalysed reaction is [GlcNAc-(1-&gt;4)-Mur2Ac(oyl-L-Ala-gamma-D-Glu-L-Lys-D-Ala-D-Ala)](n)-di-trans,octa-cis-undecaprenyl diphosphate + beta-D-GlcNAc-(1-&gt;4)-Mur2Ac(oyl-L-Ala-gamma-D-Glu-L-Lys-D-Ala-D-Ala)-di-trans,octa-cis-undecaprenyl diphosphate = [GlcNAc-(1-&gt;4)-Mur2Ac(oyl-L-Ala-gamma-D-Glu-L-Lys-D-Ala-D-Ala)](n+1)-di-trans,octa-cis-undecaprenyl diphosphate + di-trans,octa-cis-undecaprenyl diphosphate + H(+). Its pathway is cell wall biogenesis; peptidoglycan biosynthesis. Peptidoglycan polymerase that is essential for cell division. This Riesia pediculicola (strain USDA) protein is Probable peptidoglycan glycosyltransferase FtsW.